Consider the following 512-residue polypeptide: Oryzalexin E synthase (512 aa).

A helical transmembrane segment spans residues 6–26; that stretch reads SELWMTAVATCMSLLLYLTIL. C452 contributes to the heme binding site.

It belongs to the cytochrome P450 family. It depends on heme as a cofactor.

Its subcellular location is the membrane. It catalyses the reaction ent-sandaracopimaradien-3beta-ol + reduced [NADPH--hemoprotein reductase] + O2 = oryzalexin E + oxidized [NADPH--hemoprotein reductase] + H2O + H(+). In terms of biological role, enzyme of the diterpenoid metabolism involved in the biosynthesis of the oryzalexin class of phytoalexins. Can use ent-sandaracopimaradien and syn-stemodene as substrates, but no activity with syn-stemoden-19-oic acid. Hydroxylates 3-alpha-hydroxy-ent-sandaracopimaradiene at C-9-beta, resulting in a 3-alpha,9-beta-diol corresponding to oryzalexins E. The chain is Oryzalexin E synthase from Oryza sativa subsp. japonica (Rice).